The chain runs to 91 residues: Secretoglobin family 3A member 2 (91 aa).

The first 21 residues, 1–21 (MKLVSIFLLVTIGICGYSATA), serve as a signal peptide directing secretion.

The protein belongs to the secretoglobin family. UGRP subfamily. Homodimer; disulfide-linked. Monomer. Interacts with APOA1. Highly expressed in lung where it localizes to epithelial cells of the trachea, bronchus and bronchioles (at protein level). Expressed in club cells of the bronchioles. Also detected in the anterior and posterior lobes of the pituitary gland where it may localize to gonadotropic cells (at protein level). Not detected in other tissues tested.

Its subcellular location is the secreted. Functionally, secreted cytokine-like protein. Binds to the scavenger receptor MARCO. Can also bind to pathogens including the Gram-positive bacterium L.monocytogenes, the Gram-negative bacterium P.aeruginosa, and yeast. Strongly inhibits phospholipase A2 (PLA2G1B) activity. Seems to have anti-inflammatory effects in respiratory epithelium. Also has anti-fibrotic activity in lung. May play a role in fetal lung development and maturation. Promotes branching morphogenesis during early stages of lung development. In the pituitary, may inhibit production of follicle-stimulating hormone (FSH) and luteinizing hormone (LH). The protein is Secretoglobin family 3A member 2 (Scgb3a2) of Mus musculus (Mouse).